We begin with the raw amino-acid sequence, 260 residues long: Proteasome subunit alpha (260 aa).

The interval 241–260 (VEAEEVPEKEEDYSELDSNY) is disordered. The span at 242–260 (EAEEVPEKEEDYSELDSNY) shows a compositional bias: acidic residues.

It belongs to the peptidase T1A family. As to quaternary structure, the 20S proteasome core is composed of 14 alpha and 14 beta subunits that assemble into four stacked heptameric rings, resulting in a barrel-shaped structure. The two inner rings, each composed of seven catalytic beta subunits, are sandwiched by two outer rings, each composed of seven alpha subunits. The catalytic chamber with the active sites is on the inside of the barrel. Has a gated structure, the ends of the cylinder being occluded by the N-termini of the alpha-subunits. Is capped at one or both ends by the proteasome regulatory ATPase, PAN.

The protein localises to the cytoplasm. Its activity is regulated as follows. The formation of the proteasomal ATPase PAN-20S proteasome complex, via the docking of the C-termini of PAN into the intersubunit pockets in the alpha-rings, triggers opening of the gate for substrate entry. Interconversion between the open-gate and close-gate conformations leads to a dynamic regulation of the 20S proteasome proteolysis activity. Functionally, component of the proteasome core, a large protease complex with broad specificity involved in protein degradation. This chain is Proteasome subunit alpha, found in Thermococcus sibiricus (strain DSM 12597 / MM 739).